We begin with the raw amino-acid sequence, 348 residues long: sn-glycerol-3-phosphate import ATP-binding protein UgpC 3 (348 aa).

An ABC transporter domain is found at 4–234 (INIVDVKKNY…PASLFVAGFI (231 aa)). An ATP-binding site is contributed by 36 to 43 (GPSGCGKS).

It belongs to the ABC transporter superfamily. sn-glycerol-3-phosphate importer (TC 3.A.1.1.3) family. The complex is composed of two ATP-binding proteins (UgpC), two transmembrane proteins (UgpA and UgpE) and a solute-binding protein (UgpB).

The protein localises to the cell inner membrane. It catalyses the reaction sn-glycerol 3-phosphate(out) + ATP + H2O = sn-glycerol 3-phosphate(in) + ADP + phosphate + H(+). In terms of biological role, part of the ABC transporter complex UgpBAEC involved in sn-glycerol-3-phosphate (G3P) import. Responsible for energy coupling to the transport system. The protein is sn-glycerol-3-phosphate import ATP-binding protein UgpC 3 of Rhizobium etli (strain ATCC 51251 / DSM 11541 / JCM 21823 / NBRC 15573 / CFN 42).